The following is a 231-amino-acid chain: GFP-like fluorescent chromoprotein FP538 (231 aa).

F65 is modified (phenylalanine amide; atypical). Positions 66–68 (KYG) form a cross-link, 2-tetrahydro-2-pyridyl-5-imidazolinone (Lys-Gly). Y67 bears the 2,3-didehydrotyrosine mark.

It belongs to the GFP family. In terms of assembly, homotetramer. Contains a chromophore consisting of modified amino acid residues. The chromophore is formed by autocatalytic backbone condensation between Xaa-N and Gly-(N+2), and oxidation of Tyr-(N+1) to didehydrotyrosine. In addition, the residue N lysine undergoes cyclization. The alpha-amino nitrogen is replaced by the epsilon-amino nitrogen, the peptide chain is broken, residue N-1 is released as an amide, and a double bond is formed between the alpha-carbon and the nitrogen so that a tetrahydropyridine ring results. Maturation of the chromophore requires nothing other than molecular oxygen. As to expression, tentacle and oral disk.

Pigment protein that is yellow in color. The protein is GFP-like fluorescent chromoprotein FP538 of Zoanthus sp. (Green polyp).